A 183-amino-acid chain; its full sequence is Thymidine kinase (183 aa).

11-18 (GPMFSGKT) provides a ligand contact to ATP. The active-site Proton acceptor is E89. F119 is a substrate binding site. C144 and C147 together coordinate Zn(2+). 163 to 167 (VMDIG) serves as a coordination point for substrate. Zn(2+) is bound by residues C176 and C179.

It belongs to the thymidine kinase family.

It carries out the reaction thymidine + ATP = dTMP + ADP + H(+). In Vertebrata (FPV), this protein is Thymidine kinase (TK).